We begin with the raw amino-acid sequence, 332 residues long: Putative potassium channel regulatory protein sup-10 (332 aa).

A signal peptide spans Met1–Cys18. Topologically, residues Trp19–Ala301 are extracellular. N-linked (GlcNAc...) asparagine glycans are attached at residues Asn61, Asn107, and Asn166. Residues Phe302–Trp322 form a helical membrane-spanning segment. Residues Gly323 to Asp332 lie on the Cytoplasmic side of the membrane.

As to quaternary structure, may form a complex with sup-9 and unc-93 where sup-10 and unc-93 act as regulatory subunits of the two pore potassium channel sup-9. Sup-10 may regulate sup-9 via sup-18. As to expression, low levels in body-wall muscles, eight vulval muscles, intestinal muscles and anal depressor muscle.

It is found in the membrane. Functionally, may contribute to coordination of muscle contraction as regulatory subunit of a nonessential potassium channel complex. This Caenorhabditis elegans protein is Putative potassium channel regulatory protein sup-10.